The primary structure comprises 342 residues: Methionine import ATP-binding protein MetN 3 (342 aa).

The ABC transporter domain occupies 2–241 (ISLKGISKTF…PKEQMTKEFV (240 aa)). 38–45 (GYSGAGKS) is an ATP binding site.

Belongs to the ABC transporter superfamily. Methionine importer (TC 3.A.1.24) family. As to quaternary structure, the complex is composed of two ATP-binding proteins (MetN), two transmembrane proteins (MetI) and a solute-binding protein (MetQ).

The protein resides in the cell membrane. The catalysed reaction is L-methionine(out) + ATP + H2O = L-methionine(in) + ADP + phosphate + H(+). It catalyses the reaction D-methionine(out) + ATP + H2O = D-methionine(in) + ADP + phosphate + H(+). Its function is as follows. Part of the ABC transporter complex MetNIQ involved in methionine import. Responsible for energy coupling to the transport system. The sequence is that of Methionine import ATP-binding protein MetN 3 from Shouchella clausii (strain KSM-K16) (Alkalihalobacillus clausii).